Here is a 552-residue protein sequence, read N- to C-terminus: Chromosomal replication initiator protein DnaA (552 aa).

Residues 1-90 (MWNETWNEIT…FTVAVTVDPT (90 aa)) are domain I, interacts with DnaA modulators. A domain II region spans residues 90–210 (TLDVIQDLPH…KPAHDPDRNG (121 aa)). The interval 113–213 (EHPHYSPVSQ…HDPDRNGSLN (101 aa)) is disordered. Over residues 155 to 170 (PQPSQSSQSAQQQPAQ) the composition is skewed to low complexity. The interval 211–427 (SLNPRYTFDT…GAFIRVSAYA (217 aa)) is domain III, AAA+ region. Residues G255, G257, K258, and T259 each coordinate ATP. The tract at residues 428 to 552 (SLNEAPINMA…TQQIKSSDRA (125 aa)) is domain IV, binds dsDNA.

Belongs to the DnaA family. Oligomerizes as a right-handed, spiral filament on DNA at oriC.

The protein localises to the cytoplasm. Functionally, plays an essential role in the initiation and regulation of chromosomal replication. ATP-DnaA binds to the origin of replication (oriC) to initiate formation of the DNA replication initiation complex once per cell cycle. Binds the DnaA box (a 9 base pair repeat at the origin) and separates the double-stranded (ds)DNA. Forms a right-handed helical filament on oriC DNA; dsDNA binds to the exterior of the filament while single-stranded (ss)DNA is stabiized in the filament's interior. The ATP-DnaA-oriC complex binds and stabilizes one strand of the AT-rich DNA unwinding element (DUE), permitting loading of DNA polymerase. After initiation quickly degrades to an ADP-DnaA complex that is not apt for DNA replication. Binds acidic phospholipids. The protein is Chromosomal replication initiator protein DnaA of Corynebacterium diphtheriae (strain ATCC 700971 / NCTC 13129 / Biotype gravis).